We begin with the raw amino-acid sequence, 270 residues long: tRNA pseudouridine synthase A (270 aa).

The active-site Nucleophile is D52. Y110 is a binding site for substrate.

Belongs to the tRNA pseudouridine synthase TruA family. Homodimer.

The catalysed reaction is uridine(38/39/40) in tRNA = pseudouridine(38/39/40) in tRNA. Its function is as follows. Formation of pseudouridine at positions 38, 39 and 40 in the anticodon stem and loop of transfer RNAs. The polypeptide is tRNA pseudouridine synthase A (Paraburkholderia xenovorans (strain LB400)).